The following is a 1939-amino-acid chain: Myosin-1 (1939 aa).

The 50-residue stretch at 33–82 (DAKTSVFVAEPKESFVKGTVQSREGGKVTVKTEAGATLTVKEDQVFPMNP) folds into the Myosin N-terminal SH3-like domain. A phosphothreonine mark is found at threonine 64 and threonine 69. A Myosin motor domain is found at 86–782 (DKIEDMAMMT…LLGLLEEMRD (697 aa)). Residue lysine 130 is modified to N6,N6,N6-trimethyllysine. 179–186 (GESGAGKT) provides a ligand contact to ATP. The residue at position 389 (tyrosine 389) is a Phosphotyrosine. Residue threonine 419 is modified to Phosphothreonine. A Phosphotyrosine modification is found at tyrosine 424. The segment at 659-681 (LNKLMTNLRSTHPHFVRCIIPNE) is actin-binding. At histidine 757 the chain carries Pros-methylhistidine. Residues 761–775 (KFGHTKVFFKAGLLG) form an actin-binding region. The 30-residue stretch at 785 to 814 (LAQLITRTQARCRGFLARVEYQKMVERRES) folds into the IQ domain. The stretch at 843–1939 (LLKSAETEKE…EVHTKIISEE (1097 aa)) forms a coiled coil. Phosphoserine occurs at positions 1092 and 1096. Disordered regions lie at residues 1125–1147 (EIEAERASRAKAEKQRSDLSREL) and 1153–1172 (RLEEAGGATSAQIEMNKKRE). Residues 1128–1147 (AERASRAKAEKQRSDLSREL) show a composition bias toward basic and acidic residues. 2 positions are modified to phosphoserine: serine 1162 and serine 1237. Phosphothreonine is present on threonine 1241. Phosphoserine is present on serine 1243. Phosphothreonine is present on threonine 1255. Serine 1261 is modified (phosphoserine). A phosphothreonine mark is found at threonine 1265 and threonine 1286. Phosphoserine is present on residues serine 1288, serine 1292, serine 1303, and serine 1306. Position 1464 is a phosphotyrosine (tyrosine 1464). Threonine 1467 bears the Phosphothreonine mark. Serine 1474 bears the Phosphoserine mark. Phosphotyrosine is present on tyrosine 1492. Phosphoserine is present on serine 1495. Residue threonine 1501 is modified to Phosphothreonine. Serine 1514 bears the Phosphoserine mark. At threonine 1517 the chain carries Phosphothreonine. Serine 1542, serine 1554, serine 1574, serine 1600, serine 1603, serine 1714, and serine 1726 each carry phosphoserine. Phosphothreonine occurs at positions 1730 and 1736. Serine 1739 carries the phosphoserine modification.

Belongs to the TRAFAC class myosin-kinesin ATPase superfamily. Myosin family. In terms of assembly, muscle myosin is a hexameric protein that consists of 2 heavy chain subunits (MHC), 2 alkali light chain subunits (MLC) and 2 regulatory light chain subunits (MLC-2). Interacts with SLC26A5.

It localises to the cytoplasm. It is found in the myofibril. Required for normal hearing. It plays a role in cochlear amplification of auditory stimuli, likely through the positive regulation of prestin (SLC26A5) activity and outer hair cell (OHC) electromotility. In Sus scrofa (Pig), this protein is Myosin-1 (MYH1).